A 1150-amino-acid chain; its full sequence is Cohesin subunit SCC3 (1150 aa).

Over residues 1-12 the composition is skewed to basic residues; sequence MTAVRRSTRIRT. Residues 1–122 form a disordered region; the sequence is MTAVRRSTRI…PAYHRSKKDQ (122 aa). S28 carries the phosphoserine modification. Positions 32–43 are enriched in basic and acidic residues; sequence VESDKITAKTQH. A compositionally biased stretch (acidic residues) spans 44-72; the sequence is EEEEEQDTGESEESSSEDDYEDQDDDDYV. Over residues 77 to 87 the composition is skewed to basic residues; it reads AKRKSRKRKPK. A coiled-coil region spans residues 305-349; the sequence is LTQQAVNLEKNYLAKLSKQLSLEEKKKRPNNKTLEKLESTIAETQ. The SCD domain maps to 367-457; sequence FVHRYKDVSD…ERFKTKILEV (91 aa). S628 is modified (phosphoserine). The tract at residues 1065-1150 is disordered; sequence ENPEPNKKNI…IDNSDEITQD (86 aa). Residues 1083–1101 are compositionally biased toward basic and acidic residues; that stretch reads QREKAPLQPNSERETDHAN.

It belongs to the SCC3 family. As to quaternary structure, interacts directly with MCD1 in cohesin complex. Cohesin complexes are composed of the SMC1 and SMC3 heterodimer attached via their hinge domain, MCD1 which link them, and IRR1/SCC3, which interacts with MCD1. The cohesin complex also interacts with SCC2, which is required for its association with chromosomes. Interacts with LIN1. In terms of processing, acetylated by ECO1.

The protein localises to the nucleus. It is found in the chromosome. Its subcellular location is the centromere. In terms of biological role, component of cohesin complex, a complex required for the cohesion of sister chromatids after DNA replication. The cohesin complex apparently forms a large proteinaceous ring within which sister chromatids can be trapped. At anaphase, the MCD1/SCC1 subunit of the complex is cleaved and dissociates from chromatin, allowing sister chromatids to segregate. The cohesin complex may also play a role in spindle pole assembly during mitosis. This is Cohesin subunit SCC3 (IRR1) from Saccharomyces cerevisiae (strain ATCC 204508 / S288c) (Baker's yeast).